The chain runs to 253 residues: Adenosylcobinamide-GDP ribazoletransferase (253 aa).

7 helical membrane-spanning segments follow: residues Ile-33 to Leu-53, Ile-56 to Asn-76, Ile-106 to Leu-126, Phe-132 to Ile-152, Val-178 to Phe-198, Leu-209 to Leu-229, and Glu-233 to His-253.

The protein belongs to the CobS family. Mg(2+) is required as a cofactor.

It is found in the cell membrane. It carries out the reaction alpha-ribazole + adenosylcob(III)inamide-GDP = adenosylcob(III)alamin + GMP + H(+). The enzyme catalyses alpha-ribazole 5'-phosphate + adenosylcob(III)inamide-GDP = adenosylcob(III)alamin 5'-phosphate + GMP + H(+). It functions in the pathway cofactor biosynthesis; adenosylcobalamin biosynthesis; adenosylcobalamin from cob(II)yrinate a,c-diamide: step 7/7. Joins adenosylcobinamide-GDP and alpha-ribazole to generate adenosylcobalamin (Ado-cobalamin). Also synthesizes adenosylcobalamin 5'-phosphate from adenosylcobinamide-GDP and alpha-ribazole 5'-phosphate. The sequence is that of Adenosylcobinamide-GDP ribazoletransferase from Saccharolobus islandicus (strain M.16.27) (Sulfolobus islandicus).